The chain runs to 87 residues: Acyl-CoA-binding protein (87 aa).

An N-acetylserine modification is found at S2. Residues 2–87 enclose the ACB domain; sequence SQAEFEKAAE…VEELKQKYGI (86 aa). The residue at position 8 (K8) is an N6-acetyllysine; alternate. Position 8 is an N6-succinyllysine; alternate (K8). K14 serves as a coordination point for an acyl-CoA. The residue at position 17 (K17) is an N6-succinyllysine. K19 is subject to N6-acetyllysine. Y29 bears the Phosphotyrosine mark. An acyl-CoA contacts are provided by residues 29–33, K51, K55, and Y74; that span reads YSHYK. Position 51 is an N6-acetyllysine (K51). K55 is modified (N6-acetyllysine; alternate). The residue at position 55 (K55) is an N6-succinyllysine; alternate. K55 carries the N6-(2-hydroxyisobutyryl)lysine; alternate modification. K55 carries the post-translational modification N6-malonyllysine; alternate. N6-acetyllysine; alternate is present on K77. K77 is modified (N6-succinyllysine; alternate).

This sequence belongs to the ACBP family. Monomer.

It is found in the endoplasmic reticulum. The protein localises to the golgi apparatus. Binds medium- and long-chain acyl-CoA esters with very high affinity and may function as an intracellular carrier of acyl-CoA esters. It is also able to displace diazepam from the benzodiazepine (BZD) recognition site located on the GABA type A receptor. It is therefore possible that this protein also acts as a neuropeptide to modulate the action of the GABA receptor. The protein is Acyl-CoA-binding protein (DBI) of Oryctolagus cuniculus (Rabbit).